The chain runs to 170 residues: Nicotinamide-nucleotide adenylyltransferase (170 aa).

This sequence belongs to the archaeal NMN adenylyltransferase family.

Its subcellular location is the cytoplasm. The catalysed reaction is beta-nicotinamide D-ribonucleotide + ATP + H(+) = diphosphate + NAD(+). It participates in cofactor biosynthesis; NAD(+) biosynthesis; NAD(+) from nicotinamide D-ribonucleotide: step 1/1. This Methanothrix thermoacetophila (strain DSM 6194 / JCM 14653 / NBRC 101360 / PT) (Methanosaeta thermophila) protein is Nicotinamide-nucleotide adenylyltransferase.